The sequence spans 546 residues: Pectinesterase 1 (546 aa).

The signal sequence occupies residues 1–39; that stretch reads MANPQQPLLIKTHKQNPIISFKILSFVITLFVALFLVAP. Residues 40-229 constitute a propeptide that is removed on maturation; the sequence is YQVEIKHSNL…RKLMESSGKD (190 aa). Positions 308 and 338 each coordinate substrate. A disulfide bond links Cys327 and Cys354. Asp361 serves as the catalytic Proton donor. Asp382 functions as the Nucleophile in the catalytic mechanism. Cys395 and Cys429 form a disulfide bridge. Residues Arg450 and Trp452 each coordinate substrate.

In the N-terminal section; belongs to the PMEI family. This sequence in the C-terminal section; belongs to the pectinesterase family.

It localises to the secreted. The protein localises to the cell wall. It carries out the reaction [(1-&gt;4)-alpha-D-galacturonosyl methyl ester](n) + n H2O = [(1-&gt;4)-alpha-D-galacturonosyl](n) + n methanol + n H(+). The protein operates within glycan metabolism; pectin degradation; 2-dehydro-3-deoxy-D-gluconate from pectin: step 1/5. Pectinesterase may play a role in cell wall metabolism during fruit growth and development prior to ripening and may be required for preparing cell walls for softening by polygalacturonase during fruit ripening. This Solanum lycopersicum (Tomato) protein is Pectinesterase 1 (PME1.9).